A 448-amino-acid chain; its full sequence is MREIVHVQAGQCGNQIGAKFWEVISDEHGVQPDGTYKGDSDLQIERINVYYNEANGGKYVPRAVLVDLEPGTMDSIRGGEFGQLFRPDNFVFGQSGAGNNWAKGHYTEGAELVDNVLDVIRKEAEGCDCLQGFQLTHSLGGGTGSGMGTLLISKIREEYPDRIMSSFSVVPSPKVSDVVLEPYNATLSVHQLVENTDETFCIDNEALYDICFRTLKLANPTYGDLNHLVSVTMSGVTTCLRFPGQLNADLRKLAVNMVPFPRLHFFMPGFAPLSARDAAAYRALNVAELTQQMFDAKNMMAACDPRHGRYLTVAAMFRGRMSMREVDEQMMQVQNKNSSYFVEWIPNNVKTAVCDIPPRGLKMSATFIGNTTAIQELFKRISEQFTAMFRRKAFLHWYTGEGMDEMEFTEAESNMNDLVSEYQQYQDATADEEGDLQEGESEYIEQEE.

The GTP site is built by glutamine 11, glutamate 69, serine 138, glycine 142, threonine 143, glycine 144, asparagine 204, and asparagine 226. Residue glutamate 69 coordinates Mg(2+). Residues 427–448 form a disordered region; sequence DATADEEGDLQEGESEYIEQEE. A compositionally biased stretch (acidic residues) spans 429–448; the sequence is TADEEGDLQEGESEYIEQEE.

This sequence belongs to the tubulin family. As to quaternary structure, dimer of alpha and beta chains. A typical microtubule is a hollow water-filled tube with an outer diameter of 25 nm and an inner diameter of 15 nM. Alpha-beta heterodimers associate head-to-tail to form protofilaments running lengthwise along the microtubule wall with the beta-tubulin subunit facing the microtubule plus end conferring a structural polarity. Microtubules usually have 13 protofilaments but different protofilament numbers can be found in some organisms and specialized cells. Requires Mg(2+) as cofactor.

It localises to the cytoplasm. Its subcellular location is the cytoskeleton. Its function is as follows. Tubulin is the major constituent of microtubules, a cylinder consisting of laterally associated linear protofilaments composed of alpha- and beta-tubulin heterodimers. Microtubules grow by the addition of GTP-tubulin dimers to the microtubule end, where a stabilizing cap forms. Below the cap, tubulin dimers are in GDP-bound state, owing to GTPase activity of alpha-tubulin. The polypeptide is Tubulin beta-1 chain (Brugia pahangi (Filarial nematode worm)).